The chain runs to 404 residues: Phosphopentomutase (404 aa).

Aspartate 10, aspartate 303, histidine 308, aspartate 344, histidine 345, and histidine 356 together coordinate Mn(2+).

Belongs to the phosphopentomutase family. Mn(2+) serves as cofactor.

The protein localises to the cytoplasm. It carries out the reaction 2-deoxy-alpha-D-ribose 1-phosphate = 2-deoxy-D-ribose 5-phosphate. The catalysed reaction is alpha-D-ribose 1-phosphate = D-ribose 5-phosphate. The protein operates within carbohydrate degradation; 2-deoxy-D-ribose 1-phosphate degradation; D-glyceraldehyde 3-phosphate and acetaldehyde from 2-deoxy-alpha-D-ribose 1-phosphate: step 1/2. In terms of biological role, isomerase that catalyzes the conversion of deoxy-ribose 1-phosphate (dRib-1-P) and ribose 1-phosphate (Rib-1-P) to deoxy-ribose 5-phosphate (dRib-5-P) and ribose 5-phosphate (Rib-5-P), respectively. This is Phosphopentomutase from Shewanella sp. (strain W3-18-1).